Consider the following 707-residue polypeptide: MGDHDVALCHVSRYNHANYWAFVPLPTVSDDTGCDSLHHDSASERIRMAPPASASKAGAAEERLHPYERRLLDQYQIHLQPANRNPLSRADSAAGREETAQTPAQVQMVPVVAVADSTSDQHASVASSQDLVDLFFLEGSQAVDGLCFSPYPIYGWRTAEERRAAVCEVFKTYNVVTRLPASPAALAAAQRRYSRHRHSAIAPINKSAIETREQYWRRLSNLYTQKGVKDAASAADAAATTATNGAVPAAPAYEPEDPFYIIDLGRVVEQMARWRHELPMVRPYFAVKSNPQPAVLEVLSALGAGFDCASKEEIHMVLGRQLVASPDDIIFANPCKQLGDLREAQACGVTYVTVDNPLEMEKISRLMPSAHAIIRIKTNDSKAQCSFSTKFGAPLEDVEGLLEAARQFNVTVCGVSFHVGSGNDDQSAYVSAVRDAYQVFQQAVQYGFKCTILDIGGGFPGTEVVEGSGNTSFEAIARTIRPVLAELFGGGDVTIISEPGRYFTAASHALLMNVFASRTLRLSDVEVSRQAFQSVVSMDEPEEYQYYVNDGLYHSFNCILFDHAHPTLLLLNDGDGADGVESGTEAAAVCSEEEGETSLSGPLANDPLFMSAWDRRRSFARRPLRITTIFGPTCDSMDCILKKQPFPEMKLGDWLLVPDMGSYTTAAAGFFNGFATRRLEWVSSVDLCARPRPVYTREGNTLRCVSE.

The disordered stretch occupies residues 83–102 (NRNPLSRADSAAGREETAQT). N6-(pyridoxal phosphate)lysine is present on lysine 288. Residues serine 421, glycine 458, and 498–501 (EPGR) contribute to the pyridoxal 5'-phosphate site. 561–562 (FD) provides a ligand contact to substrate. The active-site Proton donor; shared with dimeric partner is cysteine 634. Aspartate 635 contributes to the substrate binding site. Tyrosine 663 is a binding site for pyridoxal 5'-phosphate.

This sequence belongs to the Orn/Lys/Arg decarboxylase class-II family. As to quaternary structure, homodimer. Only the dimer is catalytically active, as the active sites are constructed of residues from both monomers. The cofactor is pyridoxal 5'-phosphate.

It catalyses the reaction L-ornithine + H(+) = putrescine + CO2. It functions in the pathway amine and polyamine biosynthesis; putrescine biosynthesis via L-ornithine pathway; putrescine from L-ornithine: step 1/1. Inhibited by antizyme (AZ) in response to polyamine levels. AZ inhibits the assembly of the functional homodimer by binding to ODC monomers and targeting them for ubiquitin-independent proteolytic destruction by the 26S proteasome. Inhibited by 1-amino-oxy-3-aminopropane (APA, an isosteric analog of putrescine). Irreversibly inhibited by alpha-difluoromethylornithine (DFMO, a curative agent of West African sleeping sickness). Catalyzes the first and rate-limiting step of polyamine biosynthesis that converts ornithine into putrescine, which is the precursor for the polyamines, spermidine and spermine. Polyamines are essential for cell proliferation and are implicated in cellular processes, ranging from DNA replication to apoptosis. In Leishmania donovani, this protein is Ornithine decarboxylase.